The sequence spans 1043 residues: RNA cytidine acetyltransferase (1043 aa).

Residues 285-294 (GRGKSAAVGL) and arginine 462 each bind ATP. Positions 551–736 (VLMAPIDKSR…VPVYIRQNSN (186 aa)) constitute an N-acetyltransferase domain. Residues 622–624 (VAV), 629–635 (QSMGYGG), and arginine 723 contribute to the acetyl-CoA site. The tract at residues 1020–1043 (IPDAKDPANKNAKKKKRFSSGGRR) is disordered. Positions 1030–1043 (NAKKKKRFSSGGRR) are enriched in basic residues.

Belongs to the RNA cytidine acetyltransferase family. NAT10 subfamily. As to quaternary structure, part of the small subunit (SSU) processome, composed of more than 70 proteins and the RNA chaperone small nucleolar RNA (snoRNA) U3.

Its subcellular location is the nucleus. It localises to the nucleolus. The enzyme catalyses a cytidine in 18S rRNA + acetyl-CoA + ATP + H2O = an N(4)-acetylcytidine in 18S rRNA + ADP + phosphate + CoA + H(+). It carries out the reaction a cytidine in tRNA + acetyl-CoA + ATP + H2O = an N(4)-acetylcytidine in tRNA + ADP + phosphate + CoA + H(+). Its function is as follows. RNA cytidine acetyltransferase with specificity toward both 18S rRNA and tRNAs. Catalyzes the formation of N(4)-acetylcytidine (ac4C) in 18S rRNA. Required for early nucleolar cleavages of precursor rRNA at sites A0, A1 and A2 during 18S rRNA synthesis. Catalyzes the formation of ac4C in serine and leucine tRNAs. Requires a tRNA-binding adapter protein for full tRNA acetyltransferase activity but not for 18S rRNA acetylation. Part of the small subunit (SSU) processome, first precursor of the small eukaryotic ribosomal subunit. During the assembly of the SSU processome in the nucleolus, many ribosome biogenesis factors, an RNA chaperone and ribosomal proteins associate with the nascent pre-rRNA and work in concert to generate RNA folding, modifications, rearrangements and cleavage as well as targeted degradation of pre-ribosomal RNA by the RNA exosome. This chain is RNA cytidine acetyltransferase, found in Caenorhabditis elegans.